We begin with the raw amino-acid sequence, 287 residues long: MEMO1 family protein MJ0403 (287 aa).

The protein belongs to the MEMO1 family.

This chain is MEMO1 family protein MJ0403, found in Methanocaldococcus jannaschii (strain ATCC 43067 / DSM 2661 / JAL-1 / JCM 10045 / NBRC 100440) (Methanococcus jannaschii).